We begin with the raw amino-acid sequence, 101 residues long: uncharacterized protein (101 aa).

An N-terminal signal peptide occupies residues 1–17; the sequence is MKKAAVLAVVLSLGLAG. C18 carries the N-palmitoyl cysteine lipid modification. Residue C18 is the site of S-diacylglycerol cysteine attachment.

It is found in the cell membrane. This is an uncharacterized protein from Pasteurella multocida (strain Pm70).